The sequence spans 750 residues: E3 ubiquitin-protein ligase rfwd3.S (750 aa).

A disordered region spans residues 92 to 206; it reads RQAAEQRSSV…GAAPPAEPAP (115 aa). The span at 105–116 shows a compositional bias: basic residues; the sequence is RVQRRSTRRHQR. Residues 122 to 144 show a composition bias toward polar residues; sequence TAGTSSRAALSNFFQINRTQGVA. The segment covering 168–181 has biased composition (acidic residues); the sequence is SSDETVELSEEEEG. Residues 263 to 307 form an RING-type; degenerate zinc finger; it reads CAICFEPWTNAGQHRLSALRCGHLFGFTCIERWLKGGAAKCPQCN. The span at 387-405 shows a compositional bias: low complexity; sequence TSMQASSSRSTISGSLSSS. Residues 387–406 are disordered; the sequence is TSMQASSSRSTISGSLSSSQ. 3 WD repeats span residues 470 to 510, 512 to 552, and 558 to 603; these read IHSK…VVQT, NTGR…NCVQ, and GSRC…YRPH.

[4Fe-4S] cluster serves as cofactor.

It is found in the nucleus. The protein resides in the PML body. Its subcellular location is the cytoplasm. The catalysed reaction is S-ubiquitinyl-[E2 ubiquitin-conjugating enzyme]-L-cysteine + [acceptor protein]-L-lysine = [E2 ubiquitin-conjugating enzyme]-L-cysteine + N(6)-ubiquitinyl-[acceptor protein]-L-lysine.. Its pathway is protein modification; protein ubiquitination. E3 ubiquitin-protein ligase required for the repair of DNA interstrand cross-links (ICL) in response to DNA damage. Plays a key role in RPA-mediated DNA damage signaling and repair. Required to translesion DNA synthesis across DNA-protein cross-link adducts by catalyzing ubiquitination of proteins on single-stranded DNA (ssDNA). Mediates ubiquitination of the hmces DNA-protein cross-link, possibly promoting its degradation. This Xenopus laevis (African clawed frog) protein is E3 ubiquitin-protein ligase rfwd3.S (rfwd3.S).